The primary structure comprises 306 residues: Palmitoyl-protein thioesterase 1 (306 aa).

Residues 1-27 (MASSSCLWLLALAFLLGSCASLALGHL) form the signal peptide. Cystine bridges form between Cys-45/Cys-46, Cys-96/Cys-128, and Cys-152/Cys-160. Residue Ser-115 is part of the active site. N-linked (GlcNAc...) asparagine glycans are attached at residues Asn-197, Asn-212, and Asn-232. Residues Asp-233 and His-289 contribute to the active site.

It belongs to the palmitoyl-protein thioesterase family. As to quaternary structure, interacts with CLN5, ATP5F1A and ATP5F1B. Post-translationally, glycosylated. As to expression, spleen, brain, seminal vesicle, and testis. Lower levels of activity in liver, heart, lung, and skeletal muscle.

The protein resides in the lysosome. It localises to the secreted. The protein localises to the golgi apparatus. It is found in the endoplasmic reticulum. The enzyme catalyses S-hexadecanoyl-L-cysteinyl-[protein] + H2O = L-cysteinyl-[protein] + hexadecanoate + H(+). It catalyses the reaction hexadecanoyl-CoA + H2O = hexadecanoate + CoA + H(+). The catalysed reaction is S-hexadecanoyl-N-acetylcysteamine + H2O = N-acetylcysteamine + hexadecanoate + H(+). It carries out the reaction S-hexadecanoyl-N-acetylcysteine methyl ester + H2O = N-acetylcysteine methyl ester + hexadecanoate + H(+). With respect to regulation, palmitoylation reduces PPT1 enzymatic activity. Has thioesterase activity against fatty acid thioesters with 14 -18 carbons, including palmitoyl-CoA, S-palmitoyl-N-acetylcysteamine, and palmitoylated proteins. In contrast to PPT2, PPT1 can hydrolyze palmitoylated proteins and palmitoylcysteine. This Bos taurus (Bovine) protein is Palmitoyl-protein thioesterase 1 (PPT1).